Here is a 109-residue protein sequence, read N- to C-terminus: Large ribosomal subunit protein uL24 (109 aa).

It belongs to the universal ribosomal protein uL24 family. As to quaternary structure, part of the 50S ribosomal subunit.

Functionally, one of two assembly initiator proteins, it binds directly to the 5'-end of the 23S rRNA, where it nucleates assembly of the 50S subunit. One of the proteins that surrounds the polypeptide exit tunnel on the outside of the subunit. This is Large ribosomal subunit protein uL24 from Geotalea uraniireducens (strain Rf4) (Geobacter uraniireducens).